A 307-amino-acid polypeptide reads, in one-letter code: MIAKSGSNQESNPMFQGVYTAIITPFKNDKIDYDSYFKLLEKQIKAGVSGVVPCGTTGESPTLSHSEHAELIRETVKAVQGKIQVVAGTGSNSTKEAIELTEAACKDGVDGILSVNPYYNKPTQEGLFQHFKSIAEHSTVPVMLYNIPGRTSVNLLPETVLRLSEVKQIRSMKEATGDLGQMGKLISLVGNKMTVLSGDDNLTLPLLAIGGVGVVSVISNLFPKALVQLVESFQQGKISEAKKIHYDFIEVFALAFMETNPIPIKAAMCWFGHCGPEIRLPLTPLSQNETSSKFKKVLEGLKEKGYE.

Thr-57 serves as a coordination point for pyruvate. The active-site Proton donor/acceptor is Tyr-145. Lys-173 functions as the Schiff-base intermediate with substrate in the catalytic mechanism. Val-215 provides a ligand contact to pyruvate.

It belongs to the DapA family. In terms of assembly, homotetramer; dimer of dimers.

The protein localises to the cytoplasm. The enzyme catalyses L-aspartate 4-semialdehyde + pyruvate = (2S,4S)-4-hydroxy-2,3,4,5-tetrahydrodipicolinate + H2O + H(+). The protein operates within amino-acid biosynthesis; L-lysine biosynthesis via DAP pathway; (S)-tetrahydrodipicolinate from L-aspartate: step 3/4. Its function is as follows. Catalyzes the condensation of (S)-aspartate-beta-semialdehyde [(S)-ASA] and pyruvate to 4-hydroxy-tetrahydrodipicolinate (HTPA). In Leptospira interrogans serogroup Icterohaemorrhagiae serovar copenhageni (strain Fiocruz L1-130), this protein is 4-hydroxy-tetrahydrodipicolinate synthase.